We begin with the raw amino-acid sequence, 1183 residues long: LRR receptor-like serine/threonine-protein kinase FLS2 (1183 aa).

The N-terminal stretch at 1–41 (MERNKFASKMSQHYTKTICIAVVLVAVLFSLSSAAAAGSGA) is a signal peptide. Over 42 to 809 (AVSVQLEALL…GKKRVFSRTG (768 aa)) the chain is Extracellular. The cysteines at positions 87 and 94 are disulfide-linked. N-linked (GlcNAc...) asparagine glycans are attached at residues Asn88 and Asn120. LRR repeat units lie at residues 97 to 120 (AGQV…FLGN), 121 to 145 (ISTL…LGRL), 147 to 169 (ELEQ…LCNC), 171 to 193 (AMWA…IGDL), 194 to 217 (SNLE…MAKL), 218 to 241 (KGIM…IGDL), 242 to 265 (SNLQ…LGRC), 267 to 289 (NLTL…LGEL), 290 to 313 (TNLE…LRRC), 315 to 337 (SLLN…LGEL), 338 to 361 (PSLQ…LTNL), 363 to 385 (NLTI…IGSL), and 386 to 409 (RNLR…ISNC). A disulfide bridge links Cys167 with Cys189. N-linked (GlcNAc...) asparagine glycans are attached at residues Asn168 and Asn181. Asn267 carries N-linked (GlcNAc...) asparagine glycosylation. Residues Asn363, Asn395, Asn408, and Asn414 are each glycosylated (N-linked (GlcNAc...) asparagine). 14 LRR repeats span residues 433–457 (LQSL…LFDC), 459–480 (QLQK…LVGQ), 481–505 (LGNL…IGNM), 507–529 (KLIS…ISNM), 530–553 (SSLQ…VFEL), 555–577 (QLTI…VANL), 578–600 (RSLS…ALGR), 601–625 (LDQL…VIAS), 627–651 (SNVQ…IGGL), 652–675 (VMVQ…LAGC), 676–699 (KNLY…LFPQ), 701–724 (DLLT…IAAL), 725–748 (KHIQ…LANL), and 749–773 (TALR…VFRN). 3 N-linked (GlcNAc...) asparagine glycosylation sites follow: Asn483, Asn504, and Asn528. A glycan (N-linked (GlcNAc...) asparagine) is linked at Asn591. Residue Asn634 is glycosylated (N-linked (GlcNAc...) asparagine). Asn707, Asn747, Asn755, and Asn773 each carry an N-linked (GlcNAc...) asparagine glycan. The helical transmembrane segment at 810–830 (LVILVVLIALSTLLLLMVATI) threads the bilayer. Residues 831–1183 (LLVSYRRYRR…LKMSKLVGED (353 aa)) lie on the Cytoplasmic side of the membrane. Residues 876-1179 (FDQGNVIGSS…LSSLLKMSKL (304 aa)) enclose the Protein kinase domain. ATP is bound by residues 882-890 (IGSSNLSTV) and Lys908. Asp1013 (proton acceptor) is an active-site residue.

This sequence belongs to the protein kinase superfamily. Ser/Thr protein kinase family. As to quaternary structure, interacts with SERK2.

It localises to the cell membrane. It carries out the reaction L-seryl-[protein] + ATP = O-phospho-L-seryl-[protein] + ADP + H(+). The catalysed reaction is L-threonyl-[protein] + ATP = O-phospho-L-threonyl-[protein] + ADP + H(+). Its function is as follows. Constitutes the pattern-recognition receptor (PPR) that determines the specific perception of flagellin (flg22), a potent elicitor of the defense response to pathogen-associated molecular patterns (PAMPs). Recognizes flg22 from Pseudomonas aeruginosa and Acidovorax avenae. flg22 is a peptide derived from the bacterial flagellin N-terminus sequence. Does not recognize flg22 from Xanthomonas oryzae pv. oryzae (Xoo) or Xanthomonas oryzae pv. oryzicola (Xoc). The chain is LRR receptor-like serine/threonine-protein kinase FLS2 from Oryza sativa subsp. japonica (Rice).